The following is a 106-amino-acid chain: Large ribosomal subunit protein uL23 (106 aa).

The protein belongs to the universal ribosomal protein uL23 family. As to quaternary structure, part of the 50S ribosomal subunit. Contacts protein L29, and trigger factor when it is bound to the ribosome.

One of the early assembly proteins it binds 23S rRNA. One of the proteins that surrounds the polypeptide exit tunnel on the outside of the ribosome. Forms the main docking site for trigger factor binding to the ribosome. The chain is Large ribosomal subunit protein uL23 from Acinetobacter baumannii (strain AB307-0294).